The following is a 141-amino-acid chain: MARFSIVFAAAGVLLLVAMAPVSEASTTTIITTIIEENPYGRGRTESGCYQQMEEAEMLNHCGMYLMKNLGERSQVSPRMREEDHKQLCCMQLKNLDEKCMCPAIMMMLNEPMWIRMRDQVMSMAHNLPIECNLMSQPCQM.

An N-terminal signal peptide occupies residues 1–25; sequence MARFSIVFAAAGVLLLVAMAPVSEA. A propeptide spanning residues 26–38 is cleaved from the precursor; sequence STTTIITTIIEEN. Cystine bridges form between Cys-49/Cys-100, Cys-62/Cys-89, Cys-90/Cys-132, and Cys-102/Cys-139.

The protein belongs to the 2S seed storage albumins family. As to quaternary structure, heterodimer; disulfide-linked.

This is a 2S seed storage protein. The polypeptide is Albumin-8 (Helianthus annuus (Common sunflower)).